The primary structure comprises 1217 residues: ATP-dependent helicase/nuclease subunit A (1217 aa).

In terms of domain architecture, UvrD-like helicase ATP-binding spans 10–475 (VIWTDAQWQS…MDLSQNFRSR (466 aa)). 31-38 (AAAGSGKT) lines the ATP pocket. The UvrD-like helicase C-terminal domain maps to 491–786 (DEQVGEVNYD…RMMTIHSSKG (296 aa)).

This sequence belongs to the helicase family. AddA subfamily. Heterodimer of AddA and AddB/RexB. Requires Mg(2+) as cofactor.

It catalyses the reaction Couples ATP hydrolysis with the unwinding of duplex DNA by translocating in the 3'-5' direction.. The enzyme catalyses ATP + H2O = ADP + phosphate + H(+). Its function is as follows. The heterodimer acts as both an ATP-dependent DNA helicase and an ATP-dependent, dual-direction single-stranded exonuclease. Recognizes the chi site generating a DNA molecule suitable for the initiation of homologous recombination. The AddA nuclease domain is required for chi fragment generation; this subunit has the helicase and 3' -&gt; 5' nuclease activities. In Staphylococcus aureus (strain bovine RF122 / ET3-1), this protein is ATP-dependent helicase/nuclease subunit A.